We begin with the raw amino-acid sequence, 501 residues long: ATP synthase subunit alpha (501 aa).

An ATP-binding site is contributed by 169–176; the sequence is GDRQTGKT.

The protein belongs to the ATPase alpha/beta chains family. F-type ATPases have 2 components, CF(1) - the catalytic core - and CF(0) - the membrane proton channel. CF(1) has five subunits: alpha(3), beta(3), gamma(1), delta(1), epsilon(1). CF(0) has three main subunits: a(1), b(2) and c(9-12). The alpha and beta chains form an alternating ring which encloses part of the gamma chain. CF(1) is attached to CF(0) by a central stalk formed by the gamma and epsilon chains, while a peripheral stalk is formed by the delta and b chains.

The protein localises to the cell membrane. The enzyme catalyses ATP + H2O + 4 H(+)(in) = ADP + phosphate + 5 H(+)(out). In terms of biological role, produces ATP from ADP in the presence of a proton gradient across the membrane. The alpha chain is a regulatory subunit. This Streptococcus thermophilus (strain CNRZ 1066) protein is ATP synthase subunit alpha.